We begin with the raw amino-acid sequence, 134 residues long: Large ribosomal subunit protein eL32 (134 aa).

Belongs to the eukaryotic ribosomal protein eL32 family.

This Apis mellifera (Honeybee) protein is Large ribosomal subunit protein eL32 (RpL32).